The following is a 160-amino-acid chain: Myosin regulatory light chain, smooth muscle (160 aa).

Ser-1 is modified (blocked amino end (Ser)). At Ser-11 the chain carries Phosphoserine. 2 consecutive EF-hand domains span residues 20–55 (NQIQ…LGTA) and 88–123 (DPEE…MGDN). Residues Asp-33, Asn-35, Asp-37, and Asp-44 each coordinate Ca(2+).

Functionally, in molluscan muscle, calcium regulation is associated with myosin rather than with actin. Muscle myosin contains two types of light chains: the catalytic light chain, essential for ATPase activity, and the regulatory light chain, a calcium-binding protein responsible for Ca(2+) dependent binding and Ca(2+) dependent Mg-ATPase activity. In Spisula sachalinensis (Sakhalin surf-clam), this protein is Myosin regulatory light chain, smooth muscle.